The chain runs to 29 residues: Cyclotide psyleio C (29 aa).

Residues 1–29 (GDLPVCGETCFGGTCNTPGCVCAWPVCTR) constitute a cross-link (cyclopeptide (Gly-Arg)). Disulfide bonds link Cys-6–Cys-20, Cys-10–Cys-22, and Cys-15–Cys-27.

This is a cyclic peptide.

In terms of biological role, probably participates in a plant defense mechanism. This is Cyclotide psyleio C from Psychotria leiocarpa.